The chain runs to 824 residues: Glycerol-3-phosphate acyltransferase (824 aa).

The HXXXXD motif motif lies at cysteine 302–methionine 307.

This sequence belongs to the GPAT/DAPAT family.

It is found in the cell inner membrane. The catalysed reaction is sn-glycerol 3-phosphate + an acyl-CoA = a 1-acyl-sn-glycero-3-phosphate + CoA. It functions in the pathway phospholipid metabolism; CDP-diacylglycerol biosynthesis; CDP-diacylglycerol from sn-glycerol 3-phosphate: step 1/3. The protein is Glycerol-3-phosphate acyltransferase of Actinobacillus pleuropneumoniae serotype 5b (strain L20).